The primary structure comprises 382 residues: Dual-specificity RNA methyltransferase RlmN (382 aa).

The active-site Proton acceptor is the Glu96. Residues 102–342 (QGKRGTLCVS…VRTTRGEDID (241 aa)) form the Radical SAM core domain. Cys109 and Cys345 form a disulfide bridge. Positions 116, 120, and 123 each coordinate [4Fe-4S] cluster. S-adenosyl-L-methionine contacts are provided by residues 170–171 (GE), Ser202, 224–226 (SLH), and Asn302. Cys345 functions as the S-methylcysteine intermediate in the catalytic mechanism.

Belongs to the radical SAM superfamily. RlmN family. Requires [4Fe-4S] cluster as cofactor.

The protein localises to the cytoplasm. It carries out the reaction adenosine(2503) in 23S rRNA + 2 reduced [2Fe-2S]-[ferredoxin] + 2 S-adenosyl-L-methionine = 2-methyladenosine(2503) in 23S rRNA + 5'-deoxyadenosine + L-methionine + 2 oxidized [2Fe-2S]-[ferredoxin] + S-adenosyl-L-homocysteine. The catalysed reaction is adenosine(37) in tRNA + 2 reduced [2Fe-2S]-[ferredoxin] + 2 S-adenosyl-L-methionine = 2-methyladenosine(37) in tRNA + 5'-deoxyadenosine + L-methionine + 2 oxidized [2Fe-2S]-[ferredoxin] + S-adenosyl-L-homocysteine. Specifically methylates position 2 of adenine 2503 in 23S rRNA and position 2 of adenine 37 in tRNAs. m2A2503 modification seems to play a crucial role in the proofreading step occurring at the peptidyl transferase center and thus would serve to optimize ribosomal fidelity. The polypeptide is Dual-specificity RNA methyltransferase RlmN (Pseudomonas syringae pv. syringae (strain B728a)).